We begin with the raw amino-acid sequence, 300 residues long: Ribosomal RNA small subunit methyltransferase H (300 aa).

S-adenosyl-L-methionine contacts are provided by residues 33–35 (GGH), Asp-53, Phe-78, Asp-97, and Gln-104.

This sequence belongs to the methyltransferase superfamily. RsmH family.

It localises to the cytoplasm. The catalysed reaction is cytidine(1402) in 16S rRNA + S-adenosyl-L-methionine = N(4)-methylcytidine(1402) in 16S rRNA + S-adenosyl-L-homocysteine + H(+). Its function is as follows. Specifically methylates the N4 position of cytidine in position 1402 (C1402) of 16S rRNA. The protein is Ribosomal RNA small subunit methyltransferase H of Karelsulcia muelleri (strain GWSS) (Sulcia muelleri).